A 185-amino-acid chain; its full sequence is Large ribosomal subunit protein uL5 (185 aa).

Belongs to the universal ribosomal protein uL5 family. Part of the 50S ribosomal subunit; part of the 5S rRNA/L5/L18/L25 subcomplex. Contacts the 5S rRNA and the P site tRNA. Forms a bridge to the 30S subunit in the 70S ribosome.

Functionally, this is one of the proteins that bind and probably mediate the attachment of the 5S RNA into the large ribosomal subunit, where it forms part of the central protuberance. In the 70S ribosome it contacts protein S13 of the 30S subunit (bridge B1b), connecting the 2 subunits; this bridge is implicated in subunit movement. Contacts the P site tRNA; the 5S rRNA and some of its associated proteins might help stabilize positioning of ribosome-bound tRNAs. This Treponema pallidum (strain Nichols) protein is Large ribosomal subunit protein uL5.